Consider the following 605-residue polypeptide: F-box/WD repeat-containing protein pof1 (605 aa).

The region spanning 107 to 153 (LDFLSLLPVEISFRILSFLDARSLCQAAQVSKHWKELADDDVIWHRM) is the F-box domain. Residues 195–212 (GVDQAHESSPVKKAKLDD) are compositionally biased toward basic and acidic residues. The disordered stretch occupies residues 195–231 (GVDQAHESSPVKKAKLDDYPTSSNEETISSVKPPSPN). Polar residues predominate over residues 214 to 231 (PTSSNEETISSVKPPSPN). Phosphoserine is present on residues serine 229 and serine 232. WD repeat units follow at residues 271–299 (GHSD…RLWN), 311–339 (GHSS…RIWN), 350–379 (HGHT…KLWH), 390–420 (GHTG…KIWS), 432–460 (AHIG…KQWD), 472–500 (GHIE…KVWE), and 510–538 (NHSE…YLWL).

A part of the E3 ubiquitin ligase Skp1-Cullin-1-F-box (SCF) complex. Interacts with cul1, skp1 and phosphorylated zip1.

It is found in the nucleus. Its function is as follows. Probably recognizes and binds to some phosphorylated proteins and promotes their ubiquitination and degradation. Required for the inactivation of zip1 via ubiquitination. This chain is F-box/WD repeat-containing protein pof1 (pof1), found in Schizosaccharomyces pombe (strain 972 / ATCC 24843) (Fission yeast).